Reading from the N-terminus, the 289-residue chain is tRNA U34 carboxymethyltransferase (289 aa).

Residues Lys-60, Trp-74, Lys-79, Gly-98, 120–122, 147–148, Tyr-167, and Arg-282 contribute to the carboxy-S-adenosyl-L-methionine site; these read DPS and VE.

The protein belongs to the class I-like SAM-binding methyltransferase superfamily. CmoB family. In terms of assembly, homotetramer.

It catalyses the reaction carboxy-S-adenosyl-L-methionine + 5-hydroxyuridine(34) in tRNA = 5-carboxymethoxyuridine(34) in tRNA + S-adenosyl-L-homocysteine + H(+). Functionally, catalyzes carboxymethyl transfer from carboxy-S-adenosyl-L-methionine (Cx-SAM) to 5-hydroxyuridine (ho5U) to form 5-carboxymethoxyuridine (cmo5U) at position 34 in tRNAs. This Campylobacter concisus (strain 13826) protein is tRNA U34 carboxymethyltransferase.